A 776-amino-acid chain; its full sequence is Transcription activator of gluconeogenesis HCAG_03671 (776 aa).

A disordered region spans residues 1-70; the sequence is MTASTQNGSP…NAKDPLRPRR (70 aa). 2 stretches are compositionally biased toward polar residues: residues 21–41 and 50–60; these read NQESKNMTANPADASESQSPA and ENGQKHTSTAA. The segment at residues 77 to 105 is a DNA-binding region (zn(2)-C6 fungal-type); that stretch reads CFACQRAHLTCGDERPCQRCIKRGLQDAC. Disordered regions lie at residues 140-159, 179-248, 286-351, 556-593, and 651-726; these read RTNASQQQNGPNSNSNKDSR, TQAK…PFGA, GAGD…NIYN, NLNVNTGGSSPRGSGTFTPRNGNGVDPHSGMSASGGGG, and REAQ…SPKQ. A compositionally biased stretch (low complexity) spans 142–155; that stretch reads NASQQQNGPNSNSN. Residues 195 to 217 are compositionally biased toward polar residues; sequence MQDTSINPSAFQAPSPTSTPNFD. The span at 218–229 shows a compositional bias: low complexity; the sequence is LSSNPPNRNLSS. 4 stretches are compositionally biased toward polar residues: residues 230–244, 292–322, 334–351, and 557–576; these read AMTQTPSSASNQTQD, PSDSATQRGSIGRSSGTFTAQNFGDSTNTQP, WNPSGQSQTNPRNNNIYN, and LNVNTGGSSPRGSGTFTPRN. Residues 657–669 are compositionally biased toward gly residues; that stretch reads GPDGKGGGGGGGD. Residues 670–714 are compositionally biased toward low complexity; the sequence is VATTAATTSTSTSNGANSSGHANANRNNTNPNNSSPPSSSSAAAA.

Belongs to the ERT1/acuK family.

It localises to the nucleus. Its function is as follows. Transcription factor which regulates nonfermentable carbon utilization. Activator of gluconeogenetic genes. This Ajellomyces capsulatus (strain NAm1 / WU24) (Darling's disease fungus) protein is Transcription activator of gluconeogenesis HCAG_03671.